We begin with the raw amino-acid sequence, 452 residues long: Glycine receptor subunit alpha-2 (452 aa).

An N-terminal signal peptide occupies residues M1–C27. The Extracellular portion of the chain corresponds to K28 to Y256. N-linked (GlcNAc...) asparagine glycosylation occurs at N72. R99 contacts glycine. Residue R99 coordinates strychnine. A glycan (N-linked (GlcNAc...) asparagine) is linked at N103. A glycine-binding site is contributed by S163. C172 and C186 are disulfide-bonded. Residues E226 and E228 each contribute to the Zn(2+) site. C232 and C243 are joined by a disulfide. Residue T238 participates in glycine binding. Residue H249 participates in Zn(2+) binding. The chain crosses the membrane as a helical span at residues Y257–I278. Residues N279–A283 lie on the Cytoplasmic side of the membrane. The helical transmembrane segment at P284–S304 threads the bilayer. Over R305 to K315 the chain is Extracellular. The chain crosses the membrane as a helical span at residues A316–A336. Residues A337–T420 are Cytoplasmic-facing. Residues I421–Y441 form a helical membrane-spanning segment. Residues K442–K452 are Extracellular-facing.

The protein belongs to the ligand-gated ion channel (TC 1.A.9) family. Glycine receptor (TC 1.A.9.3) subfamily. GLRA2 sub-subfamily. As to quaternary structure, interacts with GLRB. Heteropentamer composed of GLRA2 and GLRB. Functional GLRB-GLRA2 heteropentamers contain four GLRA2 subunits and one GLRB subunit, although alternative subunit composition cannot be excluded. Homopentamer (in vitro). Both homopentamers and heteropentamers form functional ion channels, but their characteristics are subtly different.

Its subcellular location is the postsynaptic cell membrane. It localises to the synapse. The protein resides in the cell membrane. It is found in the cell projection. It carries out the reaction chloride(in) = chloride(out). Its activity is regulated as follows. Channel opening is triggered by extracellular glycine. Channel opening is also triggered by taurine and beta-alanine. Inhibited by strychnine. Inhibited by picrotoxin. Channel activity is potentiated by 10-100 uM Zn(2+). Channel activity is marginally increased by 50 mM ethanol; it is strongly increased by a combination of 0.5 uM Zn(2+) and 50 mM ethanol. Channel activity is inhibited by 100-1000 uM Zn(2+). Functionally, subunit of heteromeric glycine-gated chloride channels. Plays a role in synaptic plasticity. Contributes to the generation of inhibitory postsynaptic currents, and is involved in the down-regulation of neuronal excitability. Plays a role in cellular responses to ethanol. The chain is Glycine receptor subunit alpha-2 from Homo sapiens (Human).